The chain runs to 1647 residues: Nucleoporin nup186 (1647 aa).

Belongs to the NUP186/NUP192/NUP205 family.

The protein localises to the cytoplasm. It is found in the nucleus. Functionally, functions as a component of the nuclear pore complex (NPC). NPC components, collectively referred to as nucleoporins (NUPs), can play the role of both NPC structural components and of docking or interaction partners for transiently associated nuclear transport factors. Active directional transport is assured by both, a Phe-Gly (FG) repeat affinity gradient for these transport factors across the NPC and a transport cofactor concentration gradient across the nuclear envelope. In Schizosaccharomyces pombe (strain 972 / ATCC 24843) (Fission yeast), this protein is Nucleoporin nup186 (nup186).